We begin with the raw amino-acid sequence, 314 residues long: tRNA-cytidine(32) 2-sulfurtransferase (314 aa).

The short motif at 39–44 (SGGKDS) is the PP-loop motif element. 3 residues coordinate [4Fe-4S] cluster: Cys-114, Cys-117, and Cys-205.

Belongs to the TtcA family. As to quaternary structure, homodimer. Requires Mg(2+) as cofactor. [4Fe-4S] cluster is required as a cofactor.

It is found in the cytoplasm. It carries out the reaction cytidine(32) in tRNA + S-sulfanyl-L-cysteinyl-[cysteine desulfurase] + AH2 + ATP = 2-thiocytidine(32) in tRNA + L-cysteinyl-[cysteine desulfurase] + A + AMP + diphosphate + H(+). Its pathway is tRNA modification. Its function is as follows. Catalyzes the ATP-dependent 2-thiolation of cytidine in position 32 of tRNA, to form 2-thiocytidine (s(2)C32). The sulfur atoms are provided by the cysteine/cysteine desulfurase (IscS) system. This chain is tRNA-cytidine(32) 2-sulfurtransferase, found in Cupriavidus necator (strain ATCC 17699 / DSM 428 / KCTC 22496 / NCIMB 10442 / H16 / Stanier 337) (Ralstonia eutropha).